A 64-amino-acid chain; its full sequence is Large ribosomal subunit protein bL35 (64 aa).

This sequence belongs to the bacterial ribosomal protein bL35 family.

The polypeptide is Large ribosomal subunit protein bL35 (Pseudomonas entomophila (strain L48)).